A 334-amino-acid chain; its full sequence is MSDGTSKSGSKSSFHFVAGLGSGVLSAALLQPIDLLKTRVQQSPHQNILRTVSEIRHTSPAGLRGLWRGTVPSALRTGFGSALYFSTLNAIRQAAVPLFAHDAAVTTSPNGGNFANNKNNSSRLVKLSNTGNLLAGGVARGFAGFVLMPLTVIKVRYESSLYSYRSIAGAAGDILRTEGPRGFFAGFGATALRDAPYAGLYVLLYEQFKRRLGGVVSSSAAPETNEDNRMGVSRAAAVNFSSGVLAAVACSVVSNPFDAVKTRIQLRPGRYRNMVVAARTMMAEEGARSFFSGLGLRMSRKALSSALAWTLYEELIMRAEVGWSLSSSRTERAM.

3 Solcar repeats span residues 10–94, 127–211, and 234–318; these read SKSS…IRQA, LSNT…FKRR, and RAAA…LIMR. 6 helical membrane passes run 16–41, 69–95, 133–158, 186–209, 238–264, and 293–311; these read FVAG…TRVQ, GTVP…RQAA, LLAG…VRYE, GFGA…EQFK, VNFS…KTRI, and GLGL…AWTL.

The protein belongs to the mitochondrial carrier (TC 2.A.29) family. SLC25A38 subfamily.

The protein localises to the mitochondrion inner membrane. The catalysed reaction is glycine(in) = glycine(out). Functionally, mitochondrial glycine transporter that imports glycine into the mitochondrial matrix. Plays an important role in providing glycine for the first enzymatic step in heme biosynthesis, the condensation of glycine with succinyl-CoA to produce 5-aminolevulinate (ALA) in the mitochondrial matrix. The chain is Mitochondrial glycine transporter from Pyricularia oryzae (strain 70-15 / ATCC MYA-4617 / FGSC 8958) (Rice blast fungus).